The primary structure comprises 738 residues: Flagellar radial spoke protein 2 (738 aa).

Arginine 104 is subject to Asymmetric dimethylarginine. 2 stretches are compositionally biased toward acidic residues: residues 134–153 (PDWVAPEDDEAAAVETEDEA) and 161–182 (EGEEPPPEPEPEPEAAPEDGEG). The interval 134–189 (PDWVAPEDDEAAAVETEDEAAGGAALAEGEEPPPEPEPEPEAAPEDGEGDAPAPKI) is disordered. Arginine 260 bears the Asymmetric dimethylarginine mark. Positions 357 to 426 (AAAEAAAAAP…PPKPKKKKKV (70 aa)) are disordered. Over residues 371–415 (EGEEGEGEAPPAEEEPPAEEEAEEEEEEAEEGAEEGAEEGEEGEE) the composition is skewed to acidic residues. Arginine 453, arginine 538, and arginine 615 each carry asymmetric dimethylarginine. The interval 674 to 738 (AEAGEGEAVA…SSEESKAAAE (65 aa)) is disordered. A compositionally biased stretch (low complexity) spans 689–730 (PAEAEAAPAEGEAAPPAEGEGEAQPAQEGSNSSSSSSDSSSS).

It belongs to the dpy-30 family. In terms of processing, asymmetrically dimethylated at Arg-104, Arg-260, Arg-453, Arg-538 and Arg-615 during flagellum resorption. Probably methylated by PRMT1.

It is found in the cytoplasm. It localises to the cytoskeleton. Its subcellular location is the flagellum axoneme. Its function is as follows. Flagellar radial spokes contribute to the regulation of dynein arm activity and thus the pattern of flagellar bending. They consist of a thin stalk, which is attached to the a subfiber of the outer doublet microtubule, and a bulbous head, which is attached to the stalk and appears to interact with the projections from the central pair of microtubules. Binds calmodulin in a calcium-dependent manner. In Chlamydomonas reinhardtii (Chlamydomonas smithii), this protein is Flagellar radial spoke protein 2.